Consider the following 180-residue polypeptide: Secreted RxLR effector protein 5 (180 aa).

A signal peptide spans 1 to 24 (MRFYYTLLATAAALLVHSDALSAA). Positions 44–60 (RFLRRHTDSETTDNEER) match the RxLR-dEER motif.

The protein belongs to the RxLR effector family.

The protein resides in the secreted. It is found in the host cell. Secreted effector that partially suppresses elicitor-induced cell death in host and enhances virulence of P.parasitica. This is Secreted RxLR effector protein 5 from Phytophthora nicotianae (Potato buckeye rot agent).